Here is a 410-residue protein sequence, read N- to C-terminus: Phosphoglycerate kinase (410 aa).

Substrate-binding positions include 24 to 26, R40, 63 to 66, R122, and R162; these read DLN and HLGR. Residues K212, G300, E331, and 360–363 each bind ATP; that span reads GGDS.

Belongs to the phosphoglycerate kinase family. Monomer.

It is found in the cytoplasm. It carries out the reaction (2R)-3-phosphoglycerate + ATP = (2R)-3-phospho-glyceroyl phosphate + ADP. Its pathway is carbohydrate degradation; glycolysis; pyruvate from D-glyceraldehyde 3-phosphate: step 2/5. The polypeptide is Phosphoglycerate kinase (Nocardia farcinica (strain IFM 10152)).